Here is a 330-residue protein sequence, read N- to C-terminus: Olfactory receptor 1P1 (330 aa).

Over M1 to H39 the chain is Extracellular. N-linked (GlcNAc...) asparagine glycosylation is present at N19. The chain crosses the membrane as a helical span at residues I40 to V60. Residues L61–T71 are Cytoplasmic-facing. A helical transmembrane segment spans residues P72–V92. Over P93 to C111 the chain is Extracellular. A disulfide bond links C111 and C192. A helical membrane pass occupies residues L112–M132. The Cytoplasmic segment spans residues A133–Y137. The helical transmembrane segment at V138–L158 threads the bilayer. The Extracellular segment spans residues V159–E209. The chain crosses the membrane as a helical span at residues L210–S230. The Cytoplasmic segment spans residues Y231–H257. The chain crosses the membrane as a helical span at residues L258 to S278. The Extracellular segment spans residues S279–D286. A helical transmembrane segment spans residues T287–M307. At R308 to Q330 the chain is on the cytoplasmic side.

The protein belongs to the G-protein coupled receptor 1 family.

The protein localises to the cell membrane. Its function is as follows. Odorant receptor. The protein is Olfactory receptor 1P1 (OR1P1) of Homo sapiens (Human).